The sequence spans 501 residues: Putative zinc metalloprotease TM_0890 (501 aa).

Residue H17 participates in Zn(2+) binding. E18 is a catalytic residue. H21 serves as a coordination point for Zn(2+). Helical transmembrane passes span 93-115 (FLITLAGPLFSILAGYLLFLPIT), 401-420 (VQTGQIVGVVGLAGVISAAS), 427-449 (VLTVVAVITISLGVLNLLPLPAL), and 474-496 (IIHFLGFIFLMILFLYITFLDIG). Residues 96–180 (TLAGPLFSIL…LVIIRNGEKK (85 aa)) form the PDZ domain.

Belongs to the peptidase M50B family. It depends on Zn(2+) as a cofactor.

The protein localises to the cell inner membrane. In Thermotoga maritima (strain ATCC 43589 / DSM 3109 / JCM 10099 / NBRC 100826 / MSB8), this protein is Putative zinc metalloprotease TM_0890.